The primary structure comprises 477 residues: UDP-glycosyltransferase 71K1 (477 aa).

UDP-alpha-D-glucose is bound by residues Ser285, 350–351, 368–376, and 390–393; these read WA, HCGWNSILE, and YAEQ.

It belongs to the UDP-glycosyltransferase family.

Glycosyltransferase that possesses chalcone and flavonol 2'-O-glycosyltransferase activity. Converts phloretin to phlorizin (phloretin 2'-O-glucoside), a potent antioxidant. Possesses glycosyltransferase activity toward quercetin, isoliquiritigenin, butein and caffeic acid. The sequence is that of UDP-glycosyltransferase 71K1 from Malus domestica (Apple).